Here is a 353-residue protein sequence, read N- to C-terminus: UDP-N-acetylglucosamine--N-acetylmuramyl-(pentapeptide) pyrophosphoryl-undecaprenol N-acetylglucosamine transferase (353 aa).

UDP-N-acetyl-alpha-D-glucosamine contacts are provided by residues Asn-123, Arg-161, Ser-189, Ile-243, 262 to 267 (ALTVSE), and Gln-287.

This sequence belongs to the glycosyltransferase 28 family. MurG subfamily.

Its subcellular location is the cell membrane. The enzyme catalyses di-trans,octa-cis-undecaprenyl diphospho-N-acetyl-alpha-D-muramoyl-L-alanyl-D-glutamyl-meso-2,6-diaminopimeloyl-D-alanyl-D-alanine + UDP-N-acetyl-alpha-D-glucosamine = di-trans,octa-cis-undecaprenyl diphospho-[N-acetyl-alpha-D-glucosaminyl-(1-&gt;4)]-N-acetyl-alpha-D-muramoyl-L-alanyl-D-glutamyl-meso-2,6-diaminopimeloyl-D-alanyl-D-alanine + UDP + H(+). Its pathway is cell wall biogenesis; peptidoglycan biosynthesis. In terms of biological role, cell wall formation. Catalyzes the transfer of a GlcNAc subunit on undecaprenyl-pyrophosphoryl-MurNAc-pentapeptide (lipid intermediate I) to form undecaprenyl-pyrophosphoryl-MurNAc-(pentapeptide)GlcNAc (lipid intermediate II). The chain is UDP-N-acetylglucosamine--N-acetylmuramyl-(pentapeptide) pyrophosphoryl-undecaprenol N-acetylglucosamine transferase from Buchnera aphidicola subsp. Baizongia pistaciae (strain Bp).